The following is a 354-amino-acid chain: Protein sex-lethal (354 aa).

Positions 1–21 are disordered; that stretch reads MYGNNNPGSNNNNGGYPPYGY. RRM domains follow at residues 125-203 and 211-291; these read TNLI…YARP and TNLY…LAEE.

Part of a complex containing fl(2)d, Sxl and vir. Part of a complex composed of at least mei-P26, bam, bgcn and Sxl; this complex is involved in translational repression of nanos mRNA. interacts with mei-p26. Interacts with nito. Interacts with Unr; cooperates with Unr to prevent translation of msl-2 transcripts. Interacts with how; promoting nuclear retention of msl-2 transcripts. As to expression, expressed in somatic tissues, but not in the pole cells, which are the precursors of the germline. Expressed in the anterior of the germarium.

The protein resides in the nucleus. It localises to the cytoplasm. Functionally, sex determination switch protein, which controls sexual development and dosage compensation in females. Sxl protein is only active in females: it is inactive in males throughout development. Acts as a mRNA-binding protein, which specifically binds to a subset of pre-mRNAs and mRNAs and regulates their processing and/or translation. Binds nanos mRNA and is involved in bam-bgcn mediated repression of nanos mRNA translation. Promotes sexual development by controlling the female-specific alternative splicing of the transformer (tra) pre-mRNA: binds tightly to a characteristic uridine-rich polypyrimidine tract at the non-sex specific 3' splice site in one of the tra introns, preventing the general splicing factor U2AF from binding to this site and forcing it to bind to the female-specific 3' splice site. Acts as an inhibitor of dosage compensation in females by preventing production of msl-2 protein, an essential component of the MSL complex, the complex that mediates X-chromosome dosage compensation. Specifically binds to uridine stretches in both the 5'- and 3'-UTR of msl-2 transcripts. Sxl first acts at the splicing level by promoting retention of an intron in the 5' UTR of msl-2 pre-mRNA. The retained intron contains Sxl-binding sites that are required for subsequent steps of repression: after msl-2 mRNA export into the cytoplasm, Sxl coordinates its translational repression by targeting early steps of translation initiation. Together with how, Sxl also prevents production of msl-2 protein by preventing nuclear export of msl-2 transcripts. In terms of biological role, embryo-specific product, which is expressed early only in female embryos and specifies female-adult specific splicing. The polypeptide is Protein sex-lethal (Drosophila melanogaster (Fruit fly)).